An 861-amino-acid chain; its full sequence is DNA mismatch repair protein MutS (861 aa).

An ATP-binding site is contributed by 617 to 624 (GPNMGGKS). Positions 799 to 822 (ETTSLPHEQPPAAKAKDAPQVPHQ) are disordered. Over residues 808 to 820 (PPAAKAKDAPQVP) the composition is skewed to low complexity.

Belongs to the DNA mismatch repair MutS family.

Its function is as follows. This protein is involved in the repair of mismatches in DNA. It is possible that it carries out the mismatch recognition step. This protein has a weak ATPase activity. The sequence is that of DNA mismatch repair protein MutS from Pseudomonas putida (strain GB-1).